The sequence spans 766 residues: Isocitrate lyase 2 (766 aa).

Residue Gly-106–Trp-108 participates in substrate binding. Position 177 (Asp-177) interacts with Mg(2+). The Proton acceptor role is filled by Cys-215. Residues Gly-216–His-217, Arg-252, Asn-487–Ser-491, and Thr-522 each bind substrate.

Belongs to the isocitrate lyase/PEP mutase superfamily. Isocitrate lyase family. Mg(2+) is required as a cofactor.

It carries out the reaction D-threo-isocitrate = glyoxylate + succinate. Its pathway is carbohydrate metabolism; glyoxylate cycle; (S)-malate from isocitrate: step 1/2. Involved in the persistence and virulence of Mycobacterium. Catalyzes the reversible formation of succinate and glyoxylate from isocitrate, a key step of the glyoxylate cycle, which operates as an anaplerotic route for replenishing the tricarboxylic acid cycle during growth on fatty acid substrates. This Mycobacterium bovis (strain ATCC BAA-935 / AF2122/97) protein is Isocitrate lyase 2 (aceA).